Here is a 508-residue protein sequence, read N- to C-terminus: ATP synthase subunit alpha, chloroplastic (508 aa).

Residue 173 to 180 coordinates ATP; sequence GDRQTGKT.

It belongs to the ATPase alpha/beta chains family. In terms of assembly, F-type ATPases have 2 components, CF(1) - the catalytic core - and CF(0) - the membrane proton channel. CF(1) has five subunits: alpha(3), beta(3), gamma(1), delta(1), epsilon(1). CF(0) has four main subunits: a, b, b' and c.

It is found in the plastid. The protein localises to the chloroplast thylakoid membrane. The catalysed reaction is ATP + H2O + 4 H(+)(in) = ADP + phosphate + 5 H(+)(out). Produces ATP from ADP in the presence of a proton gradient across the membrane. The alpha chain is a regulatory subunit. The protein is ATP synthase subunit alpha, chloroplastic of Chara vulgaris (Common stonewort).